The chain runs to 155 residues: MNKENKSKLEKLLENVANKQDLEIYSLNIQTNQNPIVIEIIIKKTNGNDVSLDDCALFNTPASDEIEKSNLLNCSYVLEISSQGVSDELTSERDFKTFKGFPVNVELNQKNSKIKFLNGLLYEKSNDYLAINIKGRIKKIPFDEVLKISLCTLKD.

Belongs to the RimP family.

The protein resides in the cytoplasm. Required for maturation of 30S ribosomal subunits. This is Ribosome maturation factor RimP from Prochlorococcus marinus (strain MIT 9301).